An 846-amino-acid chain; its full sequence is Protein kintoun (846 aa).

Disordered stretches follow at residues 1 to 21 (MSTAAGSRKKHSKLHNEERAD), 372 to 416 (YLSR…PALT), 581 to 657 (HTSI…DSTI), and 743 to 846 (HDSS…DDEI). At Ser378 the chain carries Phosphoserine. A compositionally biased stretch (acidic residues) spans 389–403 (PVEDDADGDMPETPE). Basic residues-rich tracts occupy residues 596–612 (LHKKPSKKQRKRNKKQR) and 750–766 (QRKKNQKRRNCKLRAQQ). Ser770 is subject to Phosphoserine. Basic and acidic residues predominate over residues 821–832 (TRQDHADADAKN).

This sequence belongs to the PIH1 family. Kintoun subfamily. Interacts with Pp1alpha-96A, Pp1-87B, Pp1-13C and flw.

It localises to the cytoplasm. Functionally, required for cytoplasmic pre-assembly of axonemal dyneins, thereby playing a central role in motility in cilia and flagella. Involved in pre-assembly of dynein arm complexes in the cytoplasm before intraflagellar transport loads them for the ciliary compartment. In Drosophila persimilis (Fruit fly), this protein is Protein kintoun.